Here is a 376-residue protein sequence, read N- to C-terminus: Transforming growth factor beta-1 proprotein (376 aa).

The signal sequence occupies residues 1-22 (MRVESLLLALQCLLGFVHYSGA). The tract at residues 23 to 68 (LSTCSPLDLELIKRKRIEAIRGQILSKLRLSKEPEVDEEKESQNIP) is straightjacket domain. The interval 69–258 (AELISVYNST…SLPLDGNNSS (190 aa)) is arm domain. 3 N-linked (GlcNAc...) asparagine glycosylation sites follow: asparagine 76, asparagine 125, and asparagine 167. Residues 214–238 (DPQKTFQLKIPGLVLVRGDTETLAV) form a bowtie tail region. The short motif at 230-232 (RGD) is the Cell attachment site element. 3 disulfides stabilise this stretch: cysteine 272/cysteine 280, cysteine 308/cysteine 373, and cysteine 312/cysteine 375.

Belongs to the TGF-beta family. Latency-associated peptide: Homodimer; disulfide-linked. Latency-associated peptide: Interacts with Transforming growth factor beta-1 (TGF-beta-1) chain; interaction is non-covalent and maintains (TGF-beta-1) in a latent state; each Latency-associated peptide (LAP) monomer interacts with TGF-beta-1 in the other monomer. Transforming growth factor beta-1: Homodimer; disulfide-linked. Transforming growth factor beta-1: Interacts with TGF-beta receptors (tgfbr1 and tgfbr2), leading to signal transduction. Interacts with EFEMP2. In terms of processing, transforming growth factor beta-1 proprotein: The precursor proprotein is cleaved in the Golgi apparatus to form Transforming growth factor beta-1 (TGF-beta-1) and Latency-associated peptide (LAP) chains, which remain non-covalently linked, rendering TGF-beta-1 inactive.

Its subcellular location is the secreted. The protein localises to the extracellular space. The protein resides in the extracellular matrix. Transforming growth factor beta-1 proprotein: Precursor of the Latency-associated peptide (LAP) and Transforming growth factor beta-1 (TGF-beta-1) chains, which constitute the regulatory and active subunit of TGF-beta-1, respectively. In terms of biological role, required to maintain the Transforming growth factor beta-1 (TGF-beta-1) chain in a latent state during storage in extracellular matrix. Associates non-covalently with TGF-beta-1 and regulates its activation via interaction with 'milieu molecules', such as LTBP1, LRRC32/GARP and LRRC33/NRROS, that control activation of TGF-beta-1. Interaction with integrins (ITGAV:ITGB6 or ITGAV:ITGB8) results in distortion of the Latency-associated peptide chain and subsequent release of the active TGF-beta-1. Functionally, transforming growth factor beta-1: Multifunctional protein that regulates the growth and differentiation of various cell types and is involved in various processes, such as normal development, immune function, microglia function and responses to neurodegeneration. Activation into mature form follows different steps: following cleavage of the proprotein in the Golgi apparatus, Latency-associated peptide (LAP) and Transforming growth factor beta-1 (TGF-beta-1) chains remain non-covalently linked rendering TGF-beta-1 inactive during storage in extracellular matrix. At the same time, LAP chain interacts with 'milieu molecules', such as ltbp1, lrrc32/garp and lrrc33/nrros that control activation of TGF-beta-1 and maintain it in a latent state during storage in extracellular milieus. TGF-beta-1 is released from LAP by integrins (ITGAV:ITGB6 or ITGAV:ITGB8): integrin-binding to LAP stabilizes an alternative conformation of the LAP bowtie tail and results in distortion of the LAP chain and subsequent release of the active TGF-beta-1. Once activated following release of LAP, TGF-beta-1 acts by binding to TGF-beta receptors (tgfbr1 and tgfbr2), which transduce signal. While expressed by many cells types, TGF-beta-1 only has a very localized range of action within cell environment thanks to fine regulation of its activation by Latency-associated peptide chain (LAP) and 'milieu molecules'. Plays an important role in bone remodeling: acts as a potent stimulator of osteoblastic bone formation. Can promote either T-helper 17 cells (Th17) or regulatory T-cells (Treg) lineage differentiation in a concentration-dependent manner. Can induce epithelial-to-mesenchymal transition (EMT) and cell migration in various cell types. In Cyprinus carpio (Common carp), this protein is Transforming growth factor beta-1 proprotein (tgfb1).